A 622-amino-acid polypeptide reads, in one-letter code: Iron transport multicopper oxidase FET3 (622 aa).

The first 22 residues, 1–22, serve as a signal peptide directing secretion; the sequence is MRPKLLSVEAALFLALPELARA. Topologically, residues 23–553 are extracellular; sequence ATRKFDFEIG…NTLPPGFTPR (531 aa). Plastocyanin-like domains lie at 31–146, 156–303, and 363–498; these read IGWV…VHDK, EEVV…VYDK, and YTEA…VEDP. N-linked (GlcNAc...) asparagine glycosylation is present at Asn76. His82 and His84 together coordinate Cu cation. N-linked (GlcNAc...) asparagine glycosylation is found at Asn89 and Asn114. Cu cation-binding residues include His126 and His128. Residues Asn196, Asn200, and Asn294 are each glycosylated (N-linked (GlcNAc...) asparagine). Residues His414, His417, and His419 each coordinate Cu cation. N-linked (GlcNAc...) asparagine glycosylation occurs at Asn440. Cu cation is bound by residues His479, Cys480, His481, and His485. Residues 554-574 form a helical membrane-spanning segment; sequence GIVALVFSCICGILGVAVVAW. The Cytoplasmic portion of the chain corresponds to 575 to 622; it reads YGFSAPVGSTSAGALSAGLVENDSGDVHSAQKGPQETVVSPTGDARSH. A disordered region spans residues 597-622; it reads DSGDVHSAQKGPQETVVSPTGDARSH.

The protein belongs to the multicopper oxidase family.

The protein localises to the cell membrane. Functionally, cell surface ferroxidase; part of the reductive iron assimilatory system (RIA), a siderophore-independent iron acquisition process. Required to oxidize Fe(2+) and release it from the transporter. Seems not to be involved in virulence. This Gibberella zeae (strain ATCC MYA-4620 / CBS 123657 / FGSC 9075 / NRRL 31084 / PH-1) (Wheat head blight fungus) protein is Iron transport multicopper oxidase FET3.